The chain runs to 593 residues: Aspartate--tRNA(Asp/Asn) ligase (593 aa).

Glu-172 is an L-aspartate binding site. Residues 196-199 (QLFK) are aspartate. Arg-218 contributes to the L-aspartate binding site. Residues 218-220 (RDE) and Gln-227 each bind ATP. Residue His-450 coordinates L-aspartate. Glu-484 lines the ATP pocket. Residue Arg-491 coordinates L-aspartate. 536 to 539 (GLDR) contacts ATP.

It belongs to the class-II aminoacyl-tRNA synthetase family. Type 1 subfamily. As to quaternary structure, homodimer.

Its subcellular location is the cytoplasm. It catalyses the reaction tRNA(Asx) + L-aspartate + ATP = L-aspartyl-tRNA(Asx) + AMP + diphosphate. Its function is as follows. Aspartyl-tRNA synthetase with relaxed tRNA specificity since it is able to aspartylate not only its cognate tRNA(Asp) but also tRNA(Asn). Reaction proceeds in two steps: L-aspartate is first activated by ATP to form Asp-AMP and then transferred to the acceptor end of tRNA(Asp/Asn). This chain is Aspartate--tRNA(Asp/Asn) ligase, found in Nitrosomonas europaea (strain ATCC 19718 / CIP 103999 / KCTC 2705 / NBRC 14298).